A 310-amino-acid chain; its full sequence is p-hydroxybenzoic acid efflux pump subunit AaeA (310 aa).

The helical transmembrane segment at 12-32 (AITVVLVVLAFIAIFRAWSFY) threads the bilayer.

Belongs to the membrane fusion protein (MFP) (TC 8.A.1) family.

The protein resides in the cell inner membrane. In terms of biological role, forms an efflux pump with AaeB. The sequence is that of p-hydroxybenzoic acid efflux pump subunit AaeA from Cronobacter sakazakii (strain ATCC BAA-894) (Enterobacter sakazakii).